The primary structure comprises 340 residues: 3-isopropylmalate dehydrogenase (340 aa).

The substrate site is built by Arg-88, Arg-98, Arg-122, and Asp-212. 3 residues coordinate Mg(2+): Asp-212, Asp-236, and Asp-240. 272–284 is a binding site for NAD(+); the sequence is GSAPDIAGQGIAD.

Belongs to the isocitrate and isopropylmalate dehydrogenases family. LeuB type 2 subfamily. Homodimer. Mg(2+) serves as cofactor. Mn(2+) is required as a cofactor.

The protein localises to the cytoplasm. The catalysed reaction is (2R,3S)-3-isopropylmalate + NAD(+) = 4-methyl-2-oxopentanoate + CO2 + NADH. Its pathway is amino-acid biosynthesis; L-leucine biosynthesis; L-leucine from 3-methyl-2-oxobutanoate: step 3/4. Its function is as follows. Catalyzes the oxidation of 3-carboxy-2-hydroxy-4-methylpentanoate (3-isopropylmalate) to 3-carboxy-4-methyl-2-oxopentanoate. The product decarboxylates to 4-methyl-2 oxopentanoate. The protein is 3-isopropylmalate dehydrogenase of Corynebacterium glutamicum (strain R).